We begin with the raw amino-acid sequence, 446 residues long: MKPTHSPKTYRVKSFGCQMNVYDGERMAEMLDEKGIEPAPEGEDADLVVLNTCHIREKAVDKVYSDIGRLTKGKTQTKAPMIAVAGCVAQAEGEEIMARAPAVSMVVGPQAYHRLPGMIDAAVAGKRSTDTDMPADAKFAALPKRRKSAPSAFLTIQEGCDKFCTYCVVPYTRGAEISRPFSALIDEAKKLVEAGAKEITLLGQNVSAWTGEDAKGRALGMAGLIRELAKDPDLKRVRYTTSHPADMDDELIATHGEVEKLMPYLHLPVQSGNDRVLKAMNRSHTAESYLRLLERFRAARPDLALSGDFIVGFPGETEAEFEDTLKIVDEVRYAQAYSFKYSPRPGTPAATMERQVPKEVMDERLQRLQAALNRDQAAFNAGSVGRTCEVLVERTGKHPGQWLGKSPWLQSVWFDGDVAIGDLVQVELVEAGPNSLAGQLLETVAA.

The region spanning Lys-8 to Ala-124 is the MTTase N-terminal domain. [4Fe-4S] cluster contacts are provided by Cys-17, Cys-53, Cys-87, Cys-160, Cys-164, and Cys-167. Positions Arg-146 to Ala-378 constitute a Radical SAM core domain. Residues Ala-381–Glu-442 enclose the TRAM domain.

It belongs to the methylthiotransferase family. MiaB subfamily. In terms of assembly, monomer. The cofactor is [4Fe-4S] cluster.

The protein localises to the cytoplasm. It carries out the reaction N(6)-dimethylallyladenosine(37) in tRNA + (sulfur carrier)-SH + AH2 + 2 S-adenosyl-L-methionine = 2-methylsulfanyl-N(6)-dimethylallyladenosine(37) in tRNA + (sulfur carrier)-H + 5'-deoxyadenosine + L-methionine + A + S-adenosyl-L-homocysteine + 2 H(+). Its function is as follows. Catalyzes the methylthiolation of N6-(dimethylallyl)adenosine (i(6)A), leading to the formation of 2-methylthio-N6-(dimethylallyl)adenosine (ms(2)i(6)A) at position 37 in tRNAs that read codons beginning with uridine. The protein is tRNA-2-methylthio-N(6)-dimethylallyladenosine synthase of Erythrobacter litoralis (strain HTCC2594).